The primary structure comprises 471 residues: Cell division protein FtsP (471 aa).

The tat-type signal signal peptide spans 1 to 27 (MSLNRRQFIQASGLALCAGMTPLAAKA). A Plastocyanin-like domain is found at 229–287 (VRLRLLNASNSRRYVMRLSDGRAMNVIASDQGLLPAPMAVNQLSLAPGERREILIDMSQ).

It belongs to the FtsP family. Post-translationally, predicted to be exported by the Tat system. The position of the signal peptide cleavage has not been experimentally proven.

It localises to the periplasm. Cell division protein that is required for growth during stress conditions. May be involved in protecting or stabilizing the divisomal assembly under conditions of stress. The chain is Cell division protein FtsP from Pectobacterium atrosepticum (strain SCRI 1043 / ATCC BAA-672) (Erwinia carotovora subsp. atroseptica).